Reading from the N-terminus, the 118-residue chain is MARIAGINIPENKHTLIALTAIYGIGKKRSKFICSIANIPEHSKIVDLNEEQIDLLRTHVAKYVIEGDLRRERTLNIKRLIDLSCYRGLRHRRSLPVHGQRTKTNARTCKGPRKPIKK.

The segment at 94-118 (SLPVHGQRTKTNARTCKGPRKPIKK) is disordered.

This sequence belongs to the universal ribosomal protein uS13 family. In terms of assembly, part of the 30S ribosomal subunit. Forms a loose heterodimer with protein S19. Forms two bridges to the 50S subunit in the 70S ribosome.

Located at the top of the head of the 30S subunit, it contacts several helices of the 16S rRNA. In the 70S ribosome it contacts the 23S rRNA (bridge B1a) and protein L5 of the 50S subunit (bridge B1b), connecting the 2 subunits; these bridges are implicated in subunit movement. Contacts the tRNAs in the A and P-sites. The chain is Small ribosomal subunit protein uS13 from Buchnera aphidicola subsp. Acyrthosiphon pisum (strain 5A).